The chain runs to 309 residues: Aromatic prenyltransferase (309 aa).

Belongs to the aromatic prenyltransferase family.

Functionally, prenyltransferase that attaches isoprenoid moieties to carbon atoms of aromatic substrates in an enzyme-catalyzed Friedel-Crafts reaction. Shows specificity for dimethylallyl diphosphate (DMAPP) and does not accept geranyl diphosphate (GPP) or isopentenyl diphosphate (IPP). Prenylates the artificial substrate 2,7-dihydroxynaphthalene (2,7-DHN), as well as dihydrophenazine-1-carboxylic acid and 4-hydroxybenzoic acid at lower levels. Only traces of products are detected with aspulvinone E or flaviolin as substrates; and no product is formed with L-tryptophan, L-tyrosine, or 4-hydroxyphenylpyruvate. Ptf seems no to be involved in the prenylation reaction in the biosynthesis of aspulvinone H and J and the physiological function of ptf remains unknown. The polypeptide is Aromatic prenyltransferase (Sclerotinia sclerotiorum (strain ATCC 18683 / 1980 / Ss-1) (White mold)).